We begin with the raw amino-acid sequence, 592 residues long: Membrane protein insertase YidC (592 aa).

5 consecutive transmembrane segments (helical) span residues 8-28, 363-385, 430-450, 493-513, and 531-551; these read LFIA…FVMG, ALGQ…MFPL, INPL…FALY, IWLI…GLTM, and IFAF…AGLV.

Belongs to the OXA1/ALB3/YidC family. Type 1 subfamily. In terms of assembly, interacts with the Sec translocase complex via SecD. Specifically interacts with transmembrane segments of nascent integral membrane proteins during membrane integration.

The protein localises to the cell inner membrane. Its function is as follows. Required for the insertion and/or proper folding and/or complex formation of integral membrane proteins into the membrane. Involved in integration of membrane proteins that insert both dependently and independently of the Sec translocase complex, as well as at least some lipoproteins. Aids folding of multispanning membrane proteins. This is Membrane protein insertase YidC from Maricaulis maris (strain MCS10) (Caulobacter maris).